A 121-amino-acid chain; its full sequence is Large ribosomal subunit protein uL22 (121 aa).

Belongs to the universal ribosomal protein uL22 family. In terms of assembly, part of the 50S ribosomal subunit.

Its function is as follows. This protein binds specifically to 23S rRNA; its binding is stimulated by other ribosomal proteins, e.g. L4, L17, and L20. It is important during the early stages of 50S assembly. It makes multiple contacts with different domains of the 23S rRNA in the assembled 50S subunit and ribosome. In terms of biological role, the globular domain of the protein is located near the polypeptide exit tunnel on the outside of the subunit, while an extended beta-hairpin is found that lines the wall of the exit tunnel in the center of the 70S ribosome. The sequence is that of Large ribosomal subunit protein uL22 from Hydrogenobaculum sp. (strain Y04AAS1).